Here is a 757-residue protein sequence, read N- to C-terminus: Glutathione biosynthesis bifunctional protein GshAB (757 aa).

Residues 1-337 (MKIQHIIHEN…LGKARLAEVA (337 aa)) form a glutamate--cysteine ligase region. The ATP-grasp domain maps to 494 to 753 (KKVLQKAGFN…LTQNVIKMLF (260 aa)). Residue 521–580 (ALFENRAVVIKPKSTNYGLGITIFQQGVQNREDFAKALEIAFREDKEVMVEDYLVGTEYR) coordinates ATP. 3 residues coordinate Mg(2+): D702, E723, and N725. Residues D702, E723, and N725 each contribute to the Mn(2+) site.

In the N-terminal section; belongs to the glutamate--cysteine ligase type 1 family. Type 2 subfamily. In terms of assembly, monomer. The cofactor is Mg(2+). Requires Mn(2+) as cofactor.

The enzyme catalyses L-cysteine + L-glutamate + ATP = gamma-L-glutamyl-L-cysteine + ADP + phosphate + H(+). The catalysed reaction is gamma-L-glutamyl-L-cysteine + glycine + ATP = glutathione + ADP + phosphate + H(+). It functions in the pathway sulfur metabolism; glutathione biosynthesis; glutathione from L-cysteine and L-glutamate: step 1/2. The protein operates within sulfur metabolism; glutathione biosynthesis; glutathione from L-cysteine and L-glutamate: step 2/2. In terms of biological role, synthesizes glutathione from L-glutamate and L-cysteine via gamma-L-glutamyl-L-cysteine. This chain is Glutathione biosynthesis bifunctional protein GshAB, found in Pasteurella multocida (strain Pm70).